A 639-amino-acid polypeptide reads, in one-letter code: Tetracycline resistance protein TetW (639 aa).

One can recognise a tr-type G domain in the interval 1–243 (MKIINIGILA…VTGLFQPIGE (243 aa)). GTP contacts are provided by residues 10 to 17 (AHVDAGKT), 74 to 78 (DTPGH), and 128 to 131 (NKID).

The protein belongs to the TRAFAC class translation factor GTPase superfamily. Classic translation factor GTPase family. TetM/TetO subfamily.

Functionally, abolishes the inhibitory effect of tetracyclin on protein synthesis by a non-covalent modification of the ribosomes. This chain is Tetracycline resistance protein TetW (tetW), found in Butyrivibrio fibrisolvens.